The following is a 177-amino-acid chain: Large ribosomal subunit protein bL9 (177 aa).

This sequence belongs to the bacterial ribosomal protein bL9 family.

Binds to the 23S rRNA. In Rhodopirellula baltica (strain DSM 10527 / NCIMB 13988 / SH1), this protein is Large ribosomal subunit protein bL9.